Reading from the N-terminus, the 124-residue chain is Acidic phospholipase A2 (124 aa).

Cystine bridges form between C26–C117, C28–C44, C43–C97, C49–C124, C50–C90, C57–C83, and C77–C88. The Ca(2+) site is built by Y27, G29, and G31. The active site involves H47. D48 lines the Ca(2+) pocket. The active site involves E89.

Belongs to the phospholipase A2 family. Group II subfamily. D49 sub-subfamily. Ca(2+) serves as cofactor. Expressed by the venom gland.

The protein localises to the secreted. The catalysed reaction is a 1,2-diacyl-sn-glycero-3-phosphocholine + H2O = a 1-acyl-sn-glycero-3-phosphocholine + a fatty acid + H(+). Functionally, snake venom phospholipase A2 (PLA2) that inhibits collagen- and ADP-induced platelet aggregation. PLA2 catalyzes the calcium-dependent hydrolysis of the 2-acyl groups in 3-sn-phosphoglycerides. The protein is Acidic phospholipase A2 of Bothrops jararaca (Jararaca).